The following is a 340-amino-acid chain: Phosphate acyltransferase (340 aa).

It belongs to the PlsX family. Homodimer. Probably interacts with PlsY.

Its subcellular location is the cytoplasm. The enzyme catalyses a fatty acyl-[ACP] + phosphate = an acyl phosphate + holo-[ACP]. It functions in the pathway lipid metabolism; phospholipid metabolism. In terms of biological role, catalyzes the reversible formation of acyl-phosphate (acyl-PO(4)) from acyl-[acyl-carrier-protein] (acyl-ACP). This enzyme utilizes acyl-ACP as fatty acyl donor, but not acyl-CoA. The chain is Phosphate acyltransferase from Leptospira biflexa serovar Patoc (strain Patoc 1 / ATCC 23582 / Paris).